Here is a 198-residue protein sequence, read N- to C-terminus: Glycerol-3-phosphate acyltransferase 2 (198 aa).

A run of 4 helical transmembrane segments spans residues 4-24 (TYLL…LVVG), 71-91 (LPII…AVLG), 113-133 (LLCY…SLLF), and 147-167 (VVAV…AMCL).

The protein belongs to the PlsY family. In terms of assembly, probably interacts with PlsX.

It is found in the cell membrane. The catalysed reaction is an acyl phosphate + sn-glycerol 3-phosphate = a 1-acyl-sn-glycero-3-phosphate + phosphate. It functions in the pathway lipid metabolism; phospholipid metabolism. Functionally, catalyzes the transfer of an acyl group from acyl-phosphate (acyl-PO(4)) to glycerol-3-phosphate (G3P) to form lysophosphatidic acid (LPA). This enzyme utilizes acyl-phosphate as fatty acyl donor, but not acyl-CoA or acyl-ACP. The sequence is that of Glycerol-3-phosphate acyltransferase 2 from Bacillus cereus (strain ATCC 10987 / NRS 248).